We begin with the raw amino-acid sequence, 444 residues long: Deoxyguanosinetriphosphate triphosphohydrolase-like protein (444 aa).

Positions 66 to 259 (RLTHSLEAAQ…MELADDIAYG (194 aa)) constitute an HD domain.

This sequence belongs to the dGTPase family. Type 2 subfamily.

This is Deoxyguanosinetriphosphate triphosphohydrolase-like protein from Vibrio campbellii (strain ATCC BAA-1116).